The following is a 299-amino-acid chain: Tyrosine recombinase XerC (299 aa).

Positions 1–85 (MKRQLEAYCA…AVRGLYRYLN (85 aa)) constitute a Core-binding (CB) domain. The region spanning 106–285 (RLPKVLDTDR…DFQHLAAVYD (180 aa)) is the Tyr recombinase domain. Active-site residues include Arg-146, Lys-170, His-237, Arg-240, and His-263. Residue Tyr-272 is the O-(3'-phospho-DNA)-tyrosine intermediate of the active site.

It belongs to the 'phage' integrase family. XerC subfamily. As to quaternary structure, forms a cyclic heterotetrameric complex composed of two molecules of XerC and two molecules of XerD.

It is found in the cytoplasm. In terms of biological role, site-specific tyrosine recombinase, which acts by catalyzing the cutting and rejoining of the recombining DNA molecules. The XerC-XerD complex is essential to convert dimers of the bacterial chromosome into monomers to permit their segregation at cell division. It also contributes to the segregational stability of plasmids. In Pseudomonas putida (strain ATCC 700007 / DSM 6899 / JCM 31910 / BCRC 17059 / LMG 24140 / F1), this protein is Tyrosine recombinase XerC.